A 363-amino-acid polypeptide reads, in one-letter code: Aminomethyltransferase (363 aa).

It belongs to the GcvT family. The glycine cleavage system is composed of four proteins: P, T, L and H.

It catalyses the reaction N(6)-[(R)-S(8)-aminomethyldihydrolipoyl]-L-lysyl-[protein] + (6S)-5,6,7,8-tetrahydrofolate = N(6)-[(R)-dihydrolipoyl]-L-lysyl-[protein] + (6R)-5,10-methylene-5,6,7,8-tetrahydrofolate + NH4(+). In terms of biological role, the glycine cleavage system catalyzes the degradation of glycine. This chain is Aminomethyltransferase, found in Nitrosomonas europaea (strain ATCC 19718 / CIP 103999 / KCTC 2705 / NBRC 14298).